Consider the following 615-residue polypeptide: Chaperone protein DnaK (615 aa).

Position 177 is a phosphothreonine; by autocatalysis (T177). The disordered stretch occupies residues 567 to 615; that stretch reads TKESQGIAMKAYQKAQEKQAQEKGTQENTTAKNEKPQDEVVDADFEEKK. The segment covering 581-591 has biased composition (basic and acidic residues); sequence AQEKQAQEKGT. Residues 605-615 show a composition bias toward acidic residues; it reads EVVDADFEEKK.

Belongs to the heat shock protein 70 family.

Functionally, acts as a chaperone. The protein is Chaperone protein DnaK of Onion yellows phytoplasma (strain OY-M).